We begin with the raw amino-acid sequence, 600 residues long: ATP-dependent zinc metalloprotease FtsH 1 (600 aa).

At 1–8 (MKTHYFKK) the chain is on the cytoplasmic side. A helical transmembrane segment spans residues 9–29 (IFNLKFLVIFFSILFCILLIL). At 30–130 (DLTFERRIKG…PKTDFHLSEL (101 aa)) the chain is on the extracellular side. Residues 131-151 (ILSLVPIVSSTIFMFYIISNI) traverse the membrane as a helical segment. Topologically, residues 152–600 (KKSSGKLNSN…IEQLVVNTKK (449 aa)) are cytoplasmic. 215 to 222 (GPPGTGKT) is a binding site for ATP. His437 contributes to the Zn(2+) binding site. Residue Glu438 is part of the active site. Zn(2+) is bound by residues His441 and Asp513.

It in the central section; belongs to the AAA ATPase family. The protein in the C-terminal section; belongs to the peptidase M41 family. In terms of assembly, homohexamer. The cofactor is Zn(2+).

Its subcellular location is the cell membrane. Acts as a processive, ATP-dependent zinc metallopeptidase for both cytoplasmic and membrane proteins. Plays a role in the quality control of integral membrane proteins. In Phytoplasma mali (strain AT), this protein is ATP-dependent zinc metalloprotease FtsH 1.